Consider the following 342-residue polypeptide: Protein-glutamate methylesterase/protein-glutamine glutaminase 1 (342 aa).

Residues 2–119 (RVAIVNDMPL…GDPKAAAQRL (118 aa)) enclose the Response regulatory domain. D53 carries the 4-aspartylphosphate modification. The region spanning 146–329 (SDTDAALVVI…LPLGDIAPRL (184 aa)) is the CheB-type methylesterase domain. Residues S158, H185, and D278 contribute to the active site.

It belongs to the CheB family. Phosphorylated by CheA. Phosphorylation of the N-terminal regulatory domain activates the methylesterase activity.

The protein resides in the cytoplasm. It catalyses the reaction [protein]-L-glutamate 5-O-methyl ester + H2O = L-glutamyl-[protein] + methanol + H(+). The enzyme catalyses L-glutaminyl-[protein] + H2O = L-glutamyl-[protein] + NH4(+). Involved in chemotaxis. Part of a chemotaxis signal transduction system that modulates chemotaxis in response to various stimuli. Catalyzes the demethylation of specific methylglutamate residues introduced into the chemoreceptors (methyl-accepting chemotaxis proteins or MCP) by CheR. Also mediates the irreversible deamidation of specific glutamine residues to glutamic acid. This chain is Protein-glutamate methylesterase/protein-glutamine glutaminase 1, found in Bordetella avium (strain 197N).